Reading from the N-terminus, the 103-residue chain is Small ribosomal subunit protein uS10 (103 aa).

It belongs to the universal ribosomal protein uS10 family. In terms of assembly, part of the 30S ribosomal subunit.

Functionally, involved in the binding of tRNA to the ribosomes. The polypeptide is Small ribosomal subunit protein uS10 (Pseudoalteromonas atlantica (strain T6c / ATCC BAA-1087)).